Reading from the N-terminus, the 565-residue chain is Glycine--tRNA ligase (565 aa).

2 residues coordinate substrate: Arg98 and Glu164. ATP is bound by residues 196–198 (RNE), 206–211 (IRLREF), 323–324 (EI), and 440–443 (GIDR). A substrate-binding site is contributed by 211–215 (FTQAE). 436-440 (EPSFG) is a substrate binding site.

The protein belongs to the class-II aminoacyl-tRNA synthetase family.

It is found in the cytoplasm. The catalysed reaction is tRNA(Gly) + glycine + ATP = glycyl-tRNA(Gly) + AMP + diphosphate. Functionally, catalyzes the attachment of glycine to tRNA(Gly). The sequence is that of Glycine--tRNA ligase from Methanothermobacter thermautotrophicus (strain ATCC 29096 / DSM 1053 / JCM 10044 / NBRC 100330 / Delta H) (Methanobacterium thermoautotrophicum).